Reading from the N-terminus, the 914-residue chain is Origin recognition complex subunit 1 (914 aa).

In terms of domain architecture, BAH spans 48–188; it reads IKLGRGDSVV…PTGEKFVDIN (141 aa). The segment at 218 to 343 is disordered; that stretch reads KEIKRGPQKK…PKDPSKPRQM (126 aa). Residues 221-230 are compositionally biased toward basic and acidic residues; it reads KRGPQKKDKA. Phosphoserine is present on serine 237. Positions 247 to 296 are enriched in acidic residues; the sequence is TDNEDGNEDESSDYESPSDIDVSEDMDSGEISADELEEEEDEEEDEDEEE. Residues 303–313 are compositionally biased toward basic residues; it reads NSPRKRGRKIK. Residues valine 435 and 479–487 contribute to the ATP site; that span reads GTPGVGKTL. Mg(2+) is bound by residues aspartate 566 and glutamate 567. ATP is bound by residues glutamate 567, asparagine 600, arginine 704, and 726-733; that span reads GYGYDGKT.

Belongs to the ORC1 family. In terms of assembly, component of the origin recognition complex (ORC) composed of at least ORC1, ORC2, ORC3, ORC4, ORC5 and ORC6. Interacts with MCM10 and TAH11.

The protein resides in the nucleus. In terms of biological role, component of the origin recognition complex (ORC) that binds origins of replication. It has a role in both chromosomal replication and mating type transcriptional silencing. Binds to the ARS consensus sequence (ACS) of origins of replication. The protein is Origin recognition complex subunit 1 (ORC1) of Saccharomyces cerevisiae (strain ATCC 204508 / S288c) (Baker's yeast).